Consider the following 776-residue polypeptide: DNA topoisomerase 1 (776 aa).

The Toprim domain occupies Met-1 to Val-111. Mg(2+) contacts are provided by Glu-7 and Asp-80. In terms of domain architecture, Topo IA-type catalytic spans Asp-132–Glu-568. The interaction with DNA stretch occupies residues Ser-166–Gln-171. The O-(5'-phospho-DNA)-tyrosine intermediate role is filled by Tyr-304. The C4-type zinc finger occupies Cys-600–Cys-627.

It belongs to the type IA topoisomerase family. Monomer. Mg(2+) is required as a cofactor.

It catalyses the reaction ATP-independent breakage of single-stranded DNA, followed by passage and rejoining.. Its function is as follows. Releases the supercoiling and torsional tension of DNA, which is introduced during the DNA replication and transcription, by transiently cleaving and rejoining one strand of the DNA duplex. Introduces a single-strand break via transesterification at a target site in duplex DNA. The scissile phosphodiester is attacked by the catalytic tyrosine of the enzyme, resulting in the formation of a DNA-(5'-phosphotyrosyl)-enzyme intermediate and the expulsion of a 3'-OH DNA strand. The free DNA strand then undergoes passage around the unbroken strand, thus removing DNA supercoils. Finally, in the religation step, the DNA 3'-OH attacks the covalent intermediate to expel the active-site tyrosine and restore the DNA phosphodiester backbone. The protein is DNA topoisomerase 1 of Rickettsia prowazekii (strain Madrid E).